A 3620-amino-acid polypeptide reads, in one-letter code: Cubilin (3620 aa).

The first 20 residues, 1-20 (MSSPFLWSLIILLTFAESNG), serve as a signal peptide directing secretion. Residues 21 to 32 (EAGGFELQRQKR) constitute a propeptide, removed in mature form. The segment at 39 to 46 (PRMATERG) is interaction with AMN. N-linked (GlcNAc...) asparagine glycosylation is present at N102. The EGF-like 1 domain maps to 129 to 165 (DKKVCSSNPCQNGGTCLNLHDSFFCICPSQWKGPLCS). Intrachain disulfides connect C133–C144, C138–C153, C155–C164, C171–C187, C181–C196, and C198–C207. An EGF-like 2; calcium-binding domain is found at 167–208 (DVNECQIYSGTPLGCQNGATCENTAGSYSCLCSPETHGPQCA). N253 carries N-linked (GlcNAc...) asparagine glycosylation. The EGF-like 3; calcium-binding domain maps to 260-301 (DIDECNLQHAPCSPLVQCFNTQGSFYCGACPTGWQGNGYSCQ). Disulfide bonds link C264-C277, C271-C286, C289-C300, C306-C321, C313-C330, C333-C344, C350-C363, C357-C373, C396-C406, C401-C415, C417-C426, C433-C444, C438-C453, C455-C464, C471-C497, C524-C546, C587-C613, C640-C662, and C705-C730. One can recognise an EGF-like 4; calcium-binding domain in the interval 302–345 (DIDECKINNGGCSVVPPVMCVNTLGSYHCQACPPGYQGDGRVCT). EGF-like domains follow at residues 346-382 (VIDICSVNNGGCHPEASCSSVLGSLPLCTCLPGYTGN) and 392-427 (LSDTCLSHPCLNGQCIETVSGYLCKCESGWAGINCT). The N-linked (GlcNAc...) asparagine glycan is linked to N425. The 37-residue stretch at 429-465 (NINECLSNPCFNGGTCVDGVNAFSCECTRFWTGFLCQ) folds into the EGF-like 7; calcium-binding domain. CUB domains are found at residues 471–583 (CGGS…WETQ), 587–699 (CGGI…YLTS), 705–812 (CGGN…YQVA), 813–924 (CGGE…FSAA), 928–1038 (CGEI…YEAT), 1044–1158 (CMED…WDGS), 1162–1274 (CGGN…YQQT), 1275–1386 (CRNV…WFIH), 1388–1503 (CGGE…WQAV), 1507–1616 (CGGI…FNQV), 1617–1731 (CGGH…YAAS), 1735–1847 (CGGT…FTKI), and 1849–1960 (GNDN…WFAV). N-linked (GlcNAc...) asparagine glycans are attached at residues N708 and N745. C757 and C775 are disulfide-bonded. N-linked (GlcNAc...) asparagine glycosylation is present at N777. C813 and C838 are joined by a disulfide. A glycan (N-linked (GlcNAc...) asparagine) is linked at N853. 2 disulfide bridges follow: C865–C887 and C928–C954. A glycan (N-linked (GlcNAc...) asparagine) is linked at N953. E976 is a Ca(2+) binding site. N980 carries an N-linked (GlcNAc...) asparagine glycan. A disulfide bridge links C981 with C1001. D984, D1023, D1025, and L1026 together coordinate Ca(2+). Cysteines 1044 and 1070 form a disulfide. 3 residues coordinate Ca(2+): E1092, D1102, and D1143. Residues C1099 and C1121 are joined by a disulfide bond. C1162 and C1188 are oxidised to a cystine. An N-linked (GlcNAc...) asparagine glycan is attached at N1165. E1210 is a Ca(2+) binding site. N-linked (GlcNAc...) asparagine glycosylation is present at N1214. C1215 and C1237 form a disulfide bridge. Ca(2+) is bound by residues D1218, D1259, and Q1262. A disulfide bridge links C1275 with C1303. N-linked (GlcNAc...) asparagine glycosylation is found at N1304 and N1316. E1325 lines the Ca(2+) pocket. Residue N1329 is glycosylated (N-linked (GlcNAc...) asparagine). A disulfide bridge links C1330 with C1348. Residues D1333, D1370, and V1372 each coordinate Ca(2+). Intrachain disulfides connect C1388/C1414 and C1441/C1463. N-linked (GlcNAc...) asparagine glycosylation is present at N1497. C1507 and C1533 form a disulfide bridge. N1548 carries an N-linked (GlcNAc...) asparagine glycan. Disulfide bonds link C1560–C1578, C1617–C1644, C1672–C1694, C1735–C1761, and C1788–C1809. N1643 is a glycosylation site (N-linked (GlcNAc...) asparagine). N-linked (GlcNAc...) asparagine glycosylation is found at N1799, N1816, and N1882. A disulfide bridge links C1902 with C1924. N-linked (GlcNAc...) asparagine glycosylation is present at N1961. 2 cysteine pairs are disulfide-bonded: C1975–C2003 and C2029–C2051. 14 consecutive CUB domains span residues 1975–2088 (CGGF…FHKS), 2089–2210 (CGGY…YEAK), 2214–2331 (CGGN…YAIA), 2333–2445 (CGGR…FESS), 2449–2562 (CGGE…YTSS), 2567–2684 (CGGS…YSFT), 2686–2798 (CGGI…WNTQ), 2802–2916 (CGGI…FVSR), 2917–3032 (CGGN…YKIT), 3034–3147 (CGGV…FQQT), 3154–3271 (CGGY…YTTV), 3275–3392 (CGGT…IAGC), 3392–3504 (CNRE…WTSS), and 3508–3620 (CGGT…TWDS). 2 N-linked (GlcNAc...) asparagine glycosylation sites follow: N2082 and N2114. Intrachain disulfides connect C2089-C2115, C2214-C2244, and C2272-C2294. An N-linked (GlcNAc...) asparagine glycan is attached at N2317. C2333 and C2360 are joined by a disulfide. N-linked (GlcNAc...) asparagine glycosylation is found at N2383 and N2397. 3 disulfides stabilise this stretch: C2387–C2408, C2449–C2475, and C2502–C2524. N2528, N2578, N2589, and N2607 each carry an N-linked (GlcNAc...) asparagine glycan. Residues C2567 and C2596 are joined by a disulfide bond. Disulfide bonds link C2625/C2646, C2686/C2712, C2739/C2761, C2802/C2828, C2857/C2880, C2917/C2943, and C2974/C2996. N2810 carries N-linked (GlcNAc...) asparagine glycosylation. N2920, N2942, and N2986 each carry an N-linked (GlcNAc...) asparagine glycan. Residue T3005 is modified to Phosphothreonine. Disulfide bonds link C3034/C3061 and C3088/C3110. Residues N3039, N3100, and N3122 are each glycosylated (N-linked (GlcNAc...) asparagine). Cystine bridges form between C3154–C3182 and C3212–C3234. 3 N-linked (GlcNAc...) asparagine glycosylation sites follow: N3265, N3280, and N3292. 2 disulfides stabilise this stretch: C3275/C3303 and C3329/C3351. An N-linked (GlcNAc...) asparagine glycan is attached at N3354. Cysteines 3392 and 3418 form a disulfide. N3427, N3454, and N3530 each carry an N-linked (GlcNAc...) asparagine glycan. 3 cysteine pairs are disulfide-bonded: C3445-C3467, C3508-C3534, and C3561-C3583.

Interacts with AMN. Component of the cubam complex composed of one CUBN trimer and one AMN chain. The cubam complex can dimerize. Interacts with LRP2 in a dual-receptor complex in a calcium-dependent manner. Found in a complex with PID1/PCLI1, LRP1 and CUBNI. Interacts with LRP1 and PID1/PCLI1. In terms of processing, the precursor is cleaved by a trans-Golgi proteinase furin, removing a propeptide. N-glycosylated. In terms of tissue distribution, detected in kidney cortex (at protein level). Detected in kidney, duodenum and jejunum.

The protein resides in the apical cell membrane. It localises to the cell membrane. It is found in the membrane. Its subcellular location is the coated pit. The protein localises to the endosome. The protein resides in the lysosome membrane. Functionally, endocytic receptor which plays a role in lipoprotein, vitamin and iron metabolism by facilitating their uptake. Acts together with LRP2 to mediate endocytosis of high-density lipoproteins, GC, hemoglobin, ALB, TF and SCGB1A1. Acts together with AMN to mediate endocytosis of the CBLIF-cobalamin complex. Binds to ALB, MB, Kappa and lambda-light chains, TF, hemoglobin, GC, SCGB1A1, APOA1, high density lipoprotein, and the CBLIF-cobalamin complex. Ligand binding requires calcium. Serves as important transporter in several absorptive epithelia, including intestine, renal proximal tubules and embryonic yolk sac. May play an important role in the development of the peri-implantation embryo through internalization of APOA1 and cholesterol. Binds to LGALS3 at the maternal-fetal interface. This chain is Cubilin (CUBN), found in Canis lupus familiaris (Dog).